A 129-amino-acid polypeptide reads, in one-letter code: MIIKGSNFSVMDNSGARKVQCIQTLEGKKPTSLLRVGDKIVVVIKKMEKRKGGKYKLKVKKSDVCYAVIVKSKQPVRRKSGIIVNAGENGVILLTKTKEPIGTRLTGVVFKEVQRTGLLKNVSISKYII.

The protein belongs to the universal ribosomal protein uL14 family. As to quaternary structure, component of the mitochondrial ribosome large subunit (39S) which comprises a 16S rRNA and about 50 distinct proteins.

It localises to the mitochondrion. This Dictyostelium discoideum (Social amoeba) protein is Large ribosomal subunit protein uL14m (mrpl14).